The sequence spans 256 residues: Nuclear shuttle protein (256 aa).

The Bipartite nuclear localization signal motif lies at 18–39; it reads NTTNRFPIRRKYVGGHTRPSVR. Residues 81-96 carry the Nuclear localization signal motif; the sequence is SRGPSGDGRSRDYIKL. An interaction with Arabidopsis thaliana NSI protein region spans residues 150 to 187; it reads ELFGAYSACYVNLRLLNNQQHRYRVLHSVKRFVSSAGD.

It belongs to the begomovirus nuclear shuttle protein family. Binds to single-stranded and double-stranded viral DNA. Interacts with the host nuclear shuttle interacting (NSI) protein. This interaction may allow NSP to recruit NSI monomers to the viral genome and thus regulate nuclear export of viral genome by NSP.

The protein resides in the host nucleus. It localises to the host cytoplasm. The protein localises to the host cell membrane. Its function is as follows. Binds to the genomic viral ssDNA, shuttles it into and out of the cell nucleus. Begomoviruses use 2 proteins to transport their DNA from cell to cell. The nuclear shuttle protein (NSP) shuttles it between nucleus and cytoplasm and the movement protein (MP) probably transports the DNA-NSP complex to the cell periphery and facilitates movement across the cell wall. The polypeptide is Nuclear shuttle protein (Hewittia sublobata (Coralbush)).